A 503-amino-acid chain; its full sequence is Cytochrome c-552 (503 aa).

The signal sequence occupies residues 1–16 (MKKNTIILVGALIAIA). A heme c-binding site is contributed by His-102. Heme contacts are provided by Cys-130, Cys-133, and Lys-134. Residues Cys-168, Cys-171, His-172, Cys-210, Cys-213, and His-214 each coordinate heme c. Ca(2+) contacts are provided by Glu-216, Tyr-217, Lys-273, and Gln-275. Position 217 (Tyr-217) interacts with substrate. His-276 lines the substrate pocket. Heme c-binding residues include His-287, Cys-294, Cys-297, His-298, His-312, Cys-325, Cys-328, His-329, and His-404.

The protein belongs to the cytochrome c-552 family. The cofactor is Ca(2+). Heme c serves as cofactor.

The protein resides in the periplasm. The enzyme catalyses 6 Fe(III)-[cytochrome c] + NH4(+) + 2 H2O = 6 Fe(II)-[cytochrome c] + nitrite + 8 H(+). The protein operates within nitrogen metabolism; nitrate reduction (assimilation). Its function is as follows. Catalyzes the reduction of nitrite to ammonia, consuming six electrons in the process. The polypeptide is Cytochrome c-552 (Maridesulfovibrio salexigens (strain ATCC 14822 / DSM 2638 / NCIMB 8403 / VKM B-1763) (Desulfovibrio salexigens)).